A 158-amino-acid chain; its full sequence is 6,7-dimethyl-8-ribityllumazine synthase (158 aa).

Residues F22, 57–59 (SYE), and 81–83 (TVI) contribute to the 5-amino-6-(D-ribitylamino)uracil site. Residue H89 is the Proton donor of the active site. F114 contacts 5-amino-6-(D-ribitylamino)uracil. Residue R128 participates in (2S)-2-hydroxy-3-oxobutyl phosphate binding.

Belongs to the DMRL synthase family. In terms of assembly, forms an icosahedral capsid composed of 60 subunits, arranged as a dodecamer of pentamers.

It carries out the reaction (2S)-2-hydroxy-3-oxobutyl phosphate + 5-amino-6-(D-ribitylamino)uracil = 6,7-dimethyl-8-(1-D-ribityl)lumazine + phosphate + 2 H2O + H(+). It functions in the pathway cofactor biosynthesis; riboflavin biosynthesis; riboflavin from 2-hydroxy-3-oxobutyl phosphate and 5-amino-6-(D-ribitylamino)uracil: step 1/2. Its function is as follows. Catalyzes the formation of 6,7-dimethyl-8-ribityllumazine by condensation of 5-amino-6-(D-ribitylamino)uracil with 3,4-dihydroxy-2-butanone 4-phosphate. This is the penultimate step in the biosynthesis of riboflavin. The chain is 6,7-dimethyl-8-ribityllumazine synthase from Blochmanniella pennsylvanica (strain BPEN).